A 1414-amino-acid polypeptide reads, in one-letter code: DNA-directed RNA polymerase subunit beta' (1414 aa).

Cysteine 70, cysteine 72, cysteine 85, and cysteine 88 together coordinate Zn(2+). The Mg(2+) site is built by aspartate 460, aspartate 462, and aspartate 464. Residues cysteine 815, cysteine 889, cysteine 896, and cysteine 899 each coordinate Zn(2+). Residues 1395–1414 (EAEAQFADISSTPDSDTDAS) form a disordered region.

The protein belongs to the RNA polymerase beta' chain family. In terms of assembly, the RNAP catalytic core consists of 2 alpha, 1 beta, 1 beta' and 1 omega subunit. When a sigma factor is associated with the core the holoenzyme is formed, which can initiate transcription. Mg(2+) is required as a cofactor. It depends on Zn(2+) as a cofactor.

The enzyme catalyses RNA(n) + a ribonucleoside 5'-triphosphate = RNA(n+1) + diphosphate. Its function is as follows. DNA-dependent RNA polymerase catalyzes the transcription of DNA into RNA using the four ribonucleoside triphosphates as substrates. The polypeptide is DNA-directed RNA polymerase subunit beta' (Herminiimonas arsenicoxydans).